Consider the following 216-residue polypeptide: Transmembrane emp24 domain-containing protein eca (216 aa).

The first 20 residues, 1 to 20 (MRDQWICLALVLCALHSACG), serve as a signal peptide directing secretion. Residues 21–183 (LYFHISETER…RHTSESTNSR (163 aa)) lie on the Lumenal side of the membrane. A GOLD domain is found at 30–126 (RKCFIEEVPD…QLRVHLDIQV (97 aa)). A coiled-coil region spans residues 134–164 (ANVAQKEKLTELQLRIRQLLDQVEQITKEQN). The helical transmembrane segment at 184 to 203 (VLWWSLAQTVVLVCMGFWQM) threads the bilayer. Over 204-216 (RHLKSFFEAKKLV) the chain is Cytoplasmic. The Prevents secretion from ER signature appears at 213–216 (KKLV).

It belongs to the EMP24/GP25L family.

The protein resides in the endoplasmic reticulum membrane. Its function is as follows. Eca and bai are essential, though not redundant, for dorsoventral patterning of the embryo. Specifically required during early embryogenesis for the activity of maternal tkv, while the zygotic tkv is not affected. The protein is Transmembrane emp24 domain-containing protein eca of Drosophila mojavensis (Fruit fly).